Reading from the N-terminus, the 734-residue chain is Translation initiation factor IF-2 (734 aa).

Residues 39 to 110 are disordered; that stretch reads SKFAPRSSFT…TGKPETKKRE (72 aa). Residues 82-110 show a composition bias toward basic and acidic residues; the sequence is DYEKRKLAEQRATRRLKGDTGKPETKKRE. The 168-residue stretch at 238–405 folds into the tr-type G domain; it reads NRPPIVTVMG…SIVLQAEILD (168 aa). Positions 247–254 are G1; it reads GHVDHGKT. Residue 247–254 coordinates GTP; the sequence is GHVDHGKT. The G2 stretch occupies residues 272–276; that stretch reads GITQH. A G3 region spans residues 293–296; the sequence is DTPG. Residues 293-297 and 347-350 contribute to the GTP site; these read DTPGH and NKCD. Residues 347–350 form a G4 region; sequence NKCD. The G5 stretch occupies residues 383-385; sequence SAK.

The protein belongs to the TRAFAC class translation factor GTPase superfamily. Classic translation factor GTPase family. IF-2 subfamily.

The protein resides in the cytoplasm. Functionally, one of the essential components for the initiation of protein synthesis. Protects formylmethionyl-tRNA from spontaneous hydrolysis and promotes its binding to the 30S ribosomal subunits. Also involved in the hydrolysis of GTP during the formation of the 70S ribosomal complex. In Pelagibacter ubique (strain HTCC1062), this protein is Translation initiation factor IF-2.